The following is a 64-amino-acid chain: Large ribosomal subunit protein uL29 (64 aa).

The protein belongs to the universal ribosomal protein uL29 family.

The protein is Large ribosomal subunit protein uL29 of Burkholderia mallei (strain NCTC 10247).